We begin with the raw amino-acid sequence, 111 residues long: Flagellar hook-basal body complex protein FliE (111 aa).

Belongs to the FliE family.

The protein resides in the bacterial flagellum basal body. The sequence is that of Flagellar hook-basal body complex protein FliE from Clostridium acetobutylicum (strain ATCC 824 / DSM 792 / JCM 1419 / IAM 19013 / LMG 5710 / NBRC 13948 / NRRL B-527 / VKM B-1787 / 2291 / W).